The chain runs to 502 residues: Glycerate kinase (502 aa).

It belongs to the glycerate kinase type-2 family.

The protein resides in the cytoplasm. It carries out the reaction (R)-glycerate + ATP = (2R)-3-phosphoglycerate + ADP + H(+). This chain is Glycerate kinase (glyctk), found in Danio rerio (Zebrafish).